Consider the following 128-residue polypeptide: Large ribosomal subunit protein bL12 (128 aa).

This sequence belongs to the bacterial ribosomal protein bL12 family. In terms of assembly, homodimer. Part of the ribosomal stalk of the 50S ribosomal subunit. Forms a multimeric L10(L12)X complex, where L10 forms an elongated spine to which 2 to 4 L12 dimers bind in a sequential fashion. Binds GTP-bound translation factors.

Functionally, forms part of the ribosomal stalk which helps the ribosome interact with GTP-bound translation factors. Is thus essential for accurate translation. The sequence is that of Large ribosomal subunit protein bL12 from Synechococcus sp. (strain CC9311).